A 200-amino-acid chain; its full sequence is MAPQGDDTVFQPKDAIKSGVSGALFSGGAGLLMASLRTSMKKNNVGSMHVFTHGGGTIISFTLAGGIYRFAQQASANLREKEDGWNHAIGAFLGGSVMGLRSLRFPVILGFGAMAGSVVGAFAFSGGLTGWGRDPNVDEFERKEAMRLNRRRPVEETLAEVGEGRGIYPPGYQERRRQRLLEKYGVEVKPVSADPNVASA.

Helical transmembrane passes span 16 to 36 (IKSGVSGALFSGGAGLLMASL), 48 to 68 (MHVFTHGGGTIISFTLAGGIY), and 105 to 125 (FPVILGFGAMAGSVVGAFAFS).

As to quaternary structure, complex I is composed of about 40 different subunits.

It localises to the mitochondrion inner membrane. It carries out the reaction a ubiquinone + NADH + 5 H(+)(in) = a ubiquinol + NAD(+) + 4 H(+)(out). Its function is as follows. Transfer of electrons from NADH to the respiratory chain. The immediate electron acceptor for the enzyme is believed to be ubiquinone. This chain is NADH-ubiquinone oxidoreductase 21.3 kDa subunit, found in Neurospora crassa (strain ATCC 24698 / 74-OR23-1A / CBS 708.71 / DSM 1257 / FGSC 987).